The following is a 102-amino-acid chain: MAALNGLVLLLLTISAMFISECYSSGESQSIQRNGRCEEVTCQRKPNHLGVAVTSGCPPGCLCVIQAPDNAVNANGTRYELMTTTTTKTTTTSGTPSSEDPE.

An N-terminal signal peptide occupies residues 1 to 24 (MAALNGLVLLLLTISAMFISECYS). 2 cysteine pairs are disulfide-bonded: Cys37-Cys61 and Cys42-Cys63.

Belongs to the RaCI family. Expressed in salivary glands.

The protein localises to the secreted. Complement inhibitor. Prevents complement-mediated C5 activation by binding to C5. Binds C5 at a different binding site than the other tick complement inhibitors OmCI and CirpT1, and the drug eculizumab. The protein is Complement inhibitor RaCI6 of Dermacentor andersoni (Rocky mountain wood tick).